The primary structure comprises 530 residues: Anthranilate synthase component 1, pyocyanine specific (530 aa).

331-332 (GT) provides a ligand contact to substrate. E364 is a Mg(2+) binding site. Residues Y452, R472, 486-488 (GAG), and G488 each bind substrate. Mg(2+) is bound at residue E501.

It belongs to the anthranilate synthase component I family. In terms of assembly, heterotetramer consisting of two non-identical subunits: a beta subunit (PhnB) and a large alpha subunit (PhnA). Requires Mg(2+) as cofactor.

It carries out the reaction chorismate + L-glutamine = anthranilate + pyruvate + L-glutamate + H(+). It functions in the pathway secondary metabolite biosynthesis; pyocyanine biosynthesis. In terms of biological role, part of a heterotetrameric complex that catalyzes the two-step biosynthesis of anthranilate, a precursor for Pseudomonas quinolone signal (2-heptyl-3-hydroxy-4-quinolone; PQS) production which is required to induce the genes for the biosynthesis of the virulence factor pyocyanine (PCN), a characteristic blue-green phenazine pigment produced by P.aeruginosa. In the first step, the glutamine-binding beta subunit (PhnB) of anthranilate synthase (AS) provides the glutamine amidotransferase activity which generates ammonia as a substrate that, along with chorismate, is used in the second step, catalyzed by the large alpha subunit of AS (PhnA) to produce anthranilate. This Pseudomonas aeruginosa (strain ATCC 15692 / DSM 22644 / CIP 104116 / JCM 14847 / LMG 12228 / 1C / PRS 101 / PAO1) protein is Anthranilate synthase component 1, pyocyanine specific.